A 128-amino-acid chain; its full sequence is MKQQSEVKSLKEGKFVIIDDEPCQIVSVQHSKPGKHGAAKARVDAIGLFDGSKRSIVQPVDAKIYVPIVERKNAQVISIAGNMAQLMDTADYSTFELEIPEDLQGKINQGEEVQYMAAMGKLKFSIRQ.

K35 carries the post-translational modification Hypusine.

The protein belongs to the eIF-5A family.

It localises to the cytoplasm. Functions by promoting the formation of the first peptide bond. In Methanocella arvoryzae (strain DSM 22066 / NBRC 105507 / MRE50), this protein is Translation initiation factor 5A (eIF5A).